Reading from the N-terminus, the 94-residue chain is UPF0298 protein SZO_03600 (94 aa).

The protein belongs to the UPF0298 family.

Its subcellular location is the cytoplasm. In Streptococcus equi subsp. zooepidemicus (strain H70), this protein is UPF0298 protein SZO_03600.